The chain runs to 689 residues: Putative ATP-dependent helicase IRC3 (689 aa).

The Helicase ATP-binding domain maps to 46–211; that stretch reads NSIRQGTKRI…SMVMDKIVYH (166 aa). ATP is bound at residue 59–66; sequence LATGGGKT. The DEAH box motif lies at 158–161; that stretch reads DEAH. The 174-residue stretch at 265–438 folds into the Helicase C-terminal domain; that stretch reads ILKTYLHKKQ…KIDERLRALF (174 aa).

It belongs to the helicase family. IRC3 subfamily.

Its subcellular location is the mitochondrion. This chain is Putative ATP-dependent helicase IRC3 (IRC3), found in Saccharomyces cerevisiae (strain ATCC 204508 / S288c) (Baker's yeast).